A 232-amino-acid polypeptide reads, in one-letter code: Aspartate/glutamate leucyltransferase (232 aa).

The protein belongs to the R-transferase family. Bpt subfamily.

It localises to the cytoplasm. The enzyme catalyses N-terminal L-glutamyl-[protein] + L-leucyl-tRNA(Leu) = N-terminal L-leucyl-L-glutamyl-[protein] + tRNA(Leu) + H(+). It catalyses the reaction N-terminal L-aspartyl-[protein] + L-leucyl-tRNA(Leu) = N-terminal L-leucyl-L-aspartyl-[protein] + tRNA(Leu) + H(+). Functions in the N-end rule pathway of protein degradation where it conjugates Leu from its aminoacyl-tRNA to the N-termini of proteins containing an N-terminal aspartate or glutamate. The protein is Aspartate/glutamate leucyltransferase of Vibrio vulnificus (strain YJ016).